The primary structure comprises 373 residues: P2Y purinoceptor 1 (373 aa).

Residues 1–51 (MTEVPWSAVPNGTDAAFLAGLGSLWGNSTIASTAAVSSSFRCALIKTGFQF) lie on the Extracellular side of the membrane. N-linked (GlcNAc...) asparagine glycosylation is found at N11 and N27. Cystine bridges form between C42/C296 and C124/C202. An ADP-binding site is contributed by K46. Residues 52-74 (YYLPAVYILVFIIGFLGNSVAIW) traverse the membrane as a helical segment. Over 75–87 (MFVFHMKPWSGIS) the chain is Cytoplasmic. The helical transmembrane segment at 88 to 109 (VYMFNLALADFLYVLTLPALIF) threads the bilayer. Residues 110–125 (YYFNKTDWIFGDVMCK) are Extracellular-facing. Residue N113 is glycosylated (N-linked (GlcNAc...) asparagine). Residues 126-147 (LQRFIFHVNLYGSILFLTCISA) traverse the membrane as a helical segment. Residues 148-166 (HRYSGVVYPLKSLGRLKKK) are Cytoplasmic-facing. Residues 167 to 188 (NAIYVSVLVWLIVVVAISPILF) form a helical membrane-spanning segment. Topologically, residues 189–214 (YSGTGIRKNKTVTCYDSTSDEYLRSY) are extracellular. A glycan (N-linked (GlcNAc...) asparagine) is linked at N197. 203-205 (YDS) contributes to the ADP binding site. The helical transmembrane segment at 215–237 (FIYSMCTTVAMFCIPLVLILGCY) threads the bilayer. The Cytoplasmic segment spans residues 238–260 (GLIVRALIYKDLDNSPLRRKSIY). The helical transmembrane segment at 261 to 284 (LVIIVLTVFAVSYIPFHVMKTMNL) threads the bilayer. ADP-binding positions include 283–287 (NLRAR), 303–306 (YATY), and R310. Over 285-303 (RARLDFQTPEMCDFNDRVY) the chain is Extracellular. A helical transmembrane segment spans residues 304-325 (ATYQVTRGLASLNSCVDPILYF). Topologically, residues 326–373 (LAGDTFRRRLSRATRKASRRSEANLQSKSEEMTLNILSEFKQNGDTSL) are cytoplasmic.

The protein belongs to the G-protein coupled receptor 1 family. Expressed in muscle, heart, liver, kidney, lung, brain, spleen, but not in testis.

The protein resides in the cell membrane. Receptor for extracellular adenine nucleotides such as ADP. In platelets, binding to ADP leads to mobilization of intracellular calcium ions via activation of phospholipase C, a change in platelet shape, and ultimately platelet aggregation. This Rattus norvegicus (Rat) protein is P2Y purinoceptor 1 (P2ry1).